A 122-amino-acid polypeptide reads, in one-letter code: Short coiled-coil protein (122 aa).

The disordered stretch occupies residues 1 to 26 (MDGLNTGEEEDSAFTSISLTDDTDHS). The stretch at 43 to 101 (NADMDAVDAENQVELEEKTRLINQVLELQHTLEDLSARVDAVKEENLKLKSENQVLGQY) forms a coiled coil.

It belongs to the SCOC family. In terms of assembly, homodimer. Interacts with ARL1, ARL2 and ARL3. Directly interacts with FEZ1 and UVRAG. The interaction with UVRAG is reduced by amino acid starvation, but the complex is stabilized in the presence of FEZ1. Interacts with NRBF2.

It is found in the golgi apparatus membrane. Its subcellular location is the golgi apparatus. The protein localises to the trans-Golgi network. It localises to the cytoplasm. The protein resides in the cytosol. Functionally, positive regulator of amino acid starvation-induced autophagy. The sequence is that of Short coiled-coil protein (Scoc) from Rattus norvegicus (Rat).